We begin with the raw amino-acid sequence, 321 residues long: PI-PLC X domain-containing protein 3 (321 aa).

A PI-PLC X-box domain is found at 22–197 (SIHSIPLTNL…DYQVLVFYHS (176 aa)). Residues histidine 37 and histidine 114 contribute to the active site.

As to expression, widely expressed, with highest levels in brain, followed by heart atrium. Not detected in small intestine, nor stomach.

The protein resides in the cytoplasm. This is PI-PLC X domain-containing protein 3 (Plcxd3) from Mus musculus (Mouse).